We begin with the raw amino-acid sequence, 260 residues long: Homeobox protein Hox-D11b (260 aa).

Over residues 1-14 the composition is skewed to low complexity; the sequence is MFSSSFSYPSKTSP. 2 disordered regions span residues 1–21 and 151–206; these read MFSSSFSYPSKTSPLTSPFLA and ITPG…CTRR. The span at 167 to 179 shows a compositional bias: basic and acidic residues; that stretch reads RSPDGESSEERAG. The homeobox; truncated DNA-binding region spans 205-260; it reads RRKKRCPYSKQQIIELEREFLFNIYINKDRRMQLSHLLRLTDRCVNNPLNQDSFFT.

This sequence belongs to the Abd-B homeobox family.

Its subcellular location is the nucleus. Its function is as follows. Sequence-specific transcription factor which is part of a developmental regulatory system that provides cells with specific positional identities on the anterior-posterior axis. The sequence is that of Homeobox protein Hox-D11b (hoxd11b) from Takifugu rubripes (Japanese pufferfish).